The chain runs to 462 residues: Proline--tRNA ligase (462 aa).

Belongs to the class-II aminoacyl-tRNA synthetase family. ProS type 3 subfamily. Homodimer.

The protein resides in the cytoplasm. It carries out the reaction tRNA(Pro) + L-proline + ATP = L-prolyl-tRNA(Pro) + AMP + diphosphate. Its function is as follows. Catalyzes the attachment of proline to tRNA(Pro) in a two-step reaction: proline is first activated by ATP to form Pro-AMP and then transferred to the acceptor end of tRNA(Pro). This is Proline--tRNA ligase from Thermoplasma acidophilum (strain ATCC 25905 / DSM 1728 / JCM 9062 / NBRC 15155 / AMRC-C165).